The sequence spans 383 residues: tRNA-specific 2-thiouridylase MnmA (383 aa).

ATP-binding positions include 6–13 (AMSGGVDS) and Leu32. Residue Cys101 is the Nucleophile of the active site. Cys101 and Cys199 are joined by a disulfide. Position 125 (Gly125) interacts with ATP. The segment at 148–150 (KDQ) is interaction with tRNA. The active-site Cysteine persulfide intermediate is the Cys199.

This sequence belongs to the MnmA/TRMU family.

It is found in the cytoplasm. The enzyme catalyses S-sulfanyl-L-cysteinyl-[protein] + uridine(34) in tRNA + AH2 + ATP = 2-thiouridine(34) in tRNA + L-cysteinyl-[protein] + A + AMP + diphosphate + H(+). Functionally, catalyzes the 2-thiolation of uridine at the wobble position (U34) of tRNA, leading to the formation of s(2)U34. The polypeptide is tRNA-specific 2-thiouridylase MnmA (Kocuria rhizophila (strain ATCC 9341 / DSM 348 / NBRC 103217 / DC2201)).